The chain runs to 365 residues: Putrescine carbamoyltransferase (365 aa).

Residues 54–58 (STRTR), Arg-105, and His-132 contribute to the carbamoyl phosphate site. Position 277-280 (277-280 (HCLP)) interacts with putrescine.

Belongs to the aspartate/ornithine carbamoyltransferase superfamily. PTCase family. As to quaternary structure, homotrimer.

It localises to the cytoplasm. The enzyme catalyses carbamoyl phosphate + putrescine = N-carbamoylputrescine + phosphate + H(+). It functions in the pathway amine and polyamine biosynthesis; putrescine biosynthesis via agmatine pathway; putrescine from N-carbamoylputrescine (transferase route): step 1/1. Its function is as follows. Catalyzes the phosphorolysis of N-carbamoylputrescine to form carbamoyl phosphate and putrescine. Is involved in the degradation pathway of the polyamine agmatine. The chain is Putrescine carbamoyltransferase from Mycoplasma mycoides subsp. mycoides SC (strain CCUG 32753 / NCTC 10114 / PG1).